We begin with the raw amino-acid sequence, 394 residues long: ORC1-type DNA replication protein 3 (394 aa).

Residues 66-70 (TGKTF) and tyrosine 207 each bind ATP.

Belongs to the CDC6/cdc18 family. As to quaternary structure, monomer. Interacts with Cdc6-1, Cdc6-2, MCM and PolB1.

Involved in regulation of DNA replication. May play essential roles in origin recognition and cell cycle control of replication. Binds to DNA, with a preference for molecules that contain a bubble, a fork, or a tail. Inhibits the binding of the MCM helicase to the origin DNA and inhibits its DNA helicase activity. Also regulates the DNA polymerase and the nuclease activities of PolB1. Inhibits the DNA-binding activity of Cdc6-1 and Cdc6-2. The protein is ORC1-type DNA replication protein 3 (cdc6-3) of Saccharolobus solfataricus (strain ATCC 35092 / DSM 1617 / JCM 11322 / P2) (Sulfolobus solfataricus).